The chain runs to 377 residues: Queuine tRNA-ribosyltransferase (377 aa).

Aspartate 93 serves as the catalytic Proton acceptor. Residues 93-97 (DSGGF), aspartate 147, glutamine 190, and glycine 216 each bind substrate. The segment at 247-253 (GVGTPDD) is RNA binding. The active-site Nucleophile is the aspartate 266. The tract at residues 271 to 275 (TRAGR) is RNA binding; important for wobble base 34 recognition. Cysteine 304, cysteine 306, cysteine 309, and histidine 335 together coordinate Zn(2+).

Belongs to the queuine tRNA-ribosyltransferase family. In terms of assembly, homodimer. Within each dimer, one monomer is responsible for RNA recognition and catalysis, while the other monomer binds to the replacement base PreQ1. Requires Zn(2+) as cofactor.

The enzyme catalyses 7-aminomethyl-7-carbaguanine + guanosine(34) in tRNA = 7-aminomethyl-7-carbaguanosine(34) in tRNA + guanine. It functions in the pathway tRNA modification; tRNA-queuosine biosynthesis. In terms of biological role, catalyzes the base-exchange of a guanine (G) residue with the queuine precursor 7-aminomethyl-7-deazaguanine (PreQ1) at position 34 (anticodon wobble position) in tRNAs with GU(N) anticodons (tRNA-Asp, -Asn, -His and -Tyr). Catalysis occurs through a double-displacement mechanism. The nucleophile active site attacks the C1' of nucleotide 34 to detach the guanine base from the RNA, forming a covalent enzyme-RNA intermediate. The proton acceptor active site deprotonates the incoming PreQ1, allowing a nucleophilic attack on the C1' of the ribose to form the product. After dissociation, two additional enzymatic reactions on the tRNA convert PreQ1 to queuine (Q), resulting in the hypermodified nucleoside queuosine (7-(((4,5-cis-dihydroxy-2-cyclopenten-1-yl)amino)methyl)-7-deazaguanosine). The protein is Queuine tRNA-ribosyltransferase of Granulibacter bethesdensis (strain ATCC BAA-1260 / CGDNIH1).